Here is a 601-residue protein sequence, read N- to C-terminus: Elongation factor 4 (601 aa).

Residues 7 to 189 enclose the tr-type G domain; that stretch reads KNIRNFSIVA…AIVTRLPPPM (183 aa). Residues 19–24 and 136–139 each bind GTP; these read DHGKST and NKVD.

This sequence belongs to the TRAFAC class translation factor GTPase superfamily. Classic translation factor GTPase family. LepA subfamily.

The protein resides in the cell inner membrane. It catalyses the reaction GTP + H2O = GDP + phosphate + H(+). Its function is as follows. Required for accurate and efficient protein synthesis under certain stress conditions. May act as a fidelity factor of the translation reaction, by catalyzing a one-codon backward translocation of tRNAs on improperly translocated ribosomes. Back-translocation proceeds from a post-translocation (POST) complex to a pre-translocation (PRE) complex, thus giving elongation factor G a second chance to translocate the tRNAs correctly. Binds to ribosomes in a GTP-dependent manner. In Xanthobacter autotrophicus (strain ATCC BAA-1158 / Py2), this protein is Elongation factor 4.